A 497-amino-acid polypeptide reads, in one-letter code: Glutamyl-tRNA(Gln) amidotransferase subunit A (497 aa).

Residues Lys75 and Ser150 each act as charge relay system in the active site. The active-site Acyl-ester intermediate is the Ser174.

Belongs to the amidase family. GatA subfamily. In terms of assembly, heterotrimer of A, B and C subunits.

It catalyses the reaction L-glutamyl-tRNA(Gln) + L-glutamine + ATP + H2O = L-glutaminyl-tRNA(Gln) + L-glutamate + ADP + phosphate + H(+). Allows the formation of correctly charged Gln-tRNA(Gln) through the transamidation of misacylated Glu-tRNA(Gln) in organisms which lack glutaminyl-tRNA synthetase. The reaction takes place in the presence of glutamine and ATP through an activated gamma-phospho-Glu-tRNA(Gln). The chain is Glutamyl-tRNA(Gln) amidotransferase subunit A from Paraburkholderia phymatum (strain DSM 17167 / CIP 108236 / LMG 21445 / STM815) (Burkholderia phymatum).